The chain runs to 84 residues: Large ribosomal subunit protein bL31B (84 aa).

This sequence belongs to the bacterial ribosomal protein bL31 family. Type B subfamily. As to quaternary structure, part of the 50S ribosomal subunit.

This is Large ribosomal subunit protein bL31B from Staphylococcus aureus (strain Mu3 / ATCC 700698).